The sequence spans 984 residues: Putative formate dehydrogenase SAUSA300_2258 (984 aa).

The 77-residue stretch at 3-79 (EHLVVTLDGK…PMTVNTVNND (77 aa)) folds into the 2Fe-2S ferredoxin-type domain. Cys37, Cys48, Cys51, and Cys63 together coordinate [2Fe-2S] cluster. The region spanning 79 to 119 (DVKDAQKEALDRILEKHMLYCTVCDYNNGDCEIHNTMDAWG) is the 4Fe-4S His(Cys)3-ligated-type domain. [4Fe-4S] cluster is bound by residues His95, Cys99, Cys102, Cys109, Cys147, Cys150, Cys153, Cys157, Cys190, Cys193, Cys196, Cys200, Cys264, Cys267, Cys271, and Cys299. 4Fe-4S ferredoxin-type domains follow at residues 138 to 165 (PFYRYDPNQCILCGRCVEACQDIEVNET) and 181 to 211 (NDVPINESSCVSCGQCATVCPCNAMMEVNME). Residues 252–984 (MRKERIKKTK…YVFPGNQVDK (733 aa)) form a formate dehydrogenase region. Residues 257–313 (IKKTKTVCTYCGVGCSFEVWTKDREILKVQPSHDSPANKIATCVKGKFSWGHINSDQ) enclose the 4Fe-4S Mo/W bis-MGD-type domain.

The protein in the C-terminal section; belongs to the prokaryotic molybdopterin-containing oxidoreductase family. [2Fe-2S] cluster serves as cofactor. [4Fe-4S] cluster is required as a cofactor. It depends on Mo-bis(molybdopterin guanine dinucleotide) as a cofactor.

It carries out the reaction formate + NAD(+) = CO2 + NADH. The chain is Putative formate dehydrogenase SAUSA300_2258 from Staphylococcus aureus (strain USA300).